The primary structure comprises 278 residues: Bifunctional protein FolD (278 aa).

NADP(+)-binding positions include 164-166 (GRS) and Thr-228.

Belongs to the tetrahydrofolate dehydrogenase/cyclohydrolase family. In terms of assembly, homodimer.

It catalyses the reaction (6R)-5,10-methylene-5,6,7,8-tetrahydrofolate + NADP(+) = (6R)-5,10-methenyltetrahydrofolate + NADPH. The enzyme catalyses (6R)-5,10-methenyltetrahydrofolate + H2O = (6R)-10-formyltetrahydrofolate + H(+). Its pathway is one-carbon metabolism; tetrahydrofolate interconversion. Functionally, catalyzes the oxidation of 5,10-methylenetetrahydrofolate to 5,10-methenyltetrahydrofolate and then the hydrolysis of 5,10-methenyltetrahydrofolate to 10-formyltetrahydrofolate. The polypeptide is Bifunctional protein FolD (Mycoplasmopsis synoviae (strain 53) (Mycoplasma synoviae)).